The primary structure comprises 90 residues: uncharacterized protein (90 aa).

This is an uncharacterized protein from Escherichia coli O157:H7.